A 432-amino-acid polypeptide reads, in one-letter code: Transcriptional adapter 3 (432 aa).

A Glycyl lysine isopeptide (Lys-Gly) (interchain with G-Cter in SUMO2) cross-link involves residue Lys21. A coiled-coil region spans residues 40-69 (IEELDTLQLELETLLSSASRRLRVLEAETQ). Residues 87–127 (GRDHELGAPPKHGKPKKQKLEGKTGHGPGPGPGRPKSKNVQ) are disordered. Residue Lys129 forms a Glycyl lysine isopeptide (Lys-Gly) (interchain with G-Cter in SUMO2) linkage. The interval 272–319 (NIISPMEDSPIPDMSGKESGADGASTSPRNQNKPFSVPHTKSLESRIK) is disordered. Residues Ser280 and Ser298 each carry the phosphoserine modification. The segment covering 295–305 (ASTSPRNQNKP) has biased composition (polar residues). Positions 367-407 (LLRLAKEEVSRQELRQRVRMADNEVMDAFRKIMAARQKKRT) form a coiled coil. Lys418 carries the post-translational modification N6-acetyllysine.

The protein belongs to the NGG1 family. In terms of assembly, the PCAF complex is composed of a number of TBP-associated factors (TAFS), such as TAF5, TAF5L, TAF6, TAF6L, TAF9, TAF10 and TAF12, PCAF, and also PCAF-associated factors (PAFs), such as TADA2L/ADA2, TADA3L/ADA3 and SPT3. Interacts directly with TADA2L and PCAF and also with the high-risk HPV oncoprotein E6. Component of the STAGA transcription coactivator-HAT complex, at least composed of SUPT3H, GCN5L2, TAF5L, TAF6L, SUPT7L, TADA3L, TAD1L, TAF10, TAF12, TRRAP and TAF9. Component of the TFTC-HAT complex. Component of the ADA2A-containing complex (ATAC), composed of KAT14, KAT2A, TADA2L, TADA3L, ZZ3, MBIP, WDR5, YEATS2, CCDC101 and DR1.

Its subcellular location is the nucleus. Its function is as follows. Functions as a component of the PCAF complex. The PCAF complex is capable of efficiently acetylating histones in a nucleosomal context. The PCAF complex could be considered as the human version of the yeast SAGA complex. Also known as a coactivator for p53/TP53-dependent transcriptional activation. Component of the ATAC complex, a complex with histone acetyltransferase activity on histones H3 and H4. In Mus musculus (Mouse), this protein is Transcriptional adapter 3 (Tada3).